Reading from the N-terminus, the 1072-residue chain is MLGDGKEGTSTIPGFNQIQFEGFYRFIDQGLIEELSKFPKIEDIDHEIEFQLFVETYQLVEPLIKERDAVYESLTYSSELYVSAGLIWKTSRNMEEQRIFIGNIPLMNSLGTSIVNGIYRIVINQILQSPGIYYQSELDHNGISVYTGTIISDWGGRLELEIDKKARIWARVSRKQKISILVLSSAMGLNLREILENVCYPEIFLSFLTDKEKKKIGSKENAILEFYQQFSCVGGDPIFSESLCKELQKKFFHQRCELGRIGRRNINSRLNLNIPQNNIFLLPRDILAAADHLIGMKFGMGTLDDMNHLKNKRIRSVADLLQDQLGLALARLENVVKGTISGAIRHKLIPTPQNLVTSTPLTTTYESFFGLHPLSQVLDRTNPLTQIVHGRKLSYLGPGGLTGRTANFRIRDIHPSHYGRICPIDTSEGINVGLIGSLSIHARIGDWGSLESPFYELFEKSKKARIRMLFLSPSQDEYYMIAAGNSLALNRGIQEEQAVPARYRQEFLTIAWEEVHLRSIFPFQYFSIGASLIPFIEHNDANRALMSSNMQRQAVPLSRSEKCIVGTGLERQVALDSGVPAIAEHEGKILYTDTEKIVFSSNGDTLSIPLIMYQRSNKNTCMHQKPQVRRGKCIKKGQILADGAATVGGELALGKNILVAYMPWEGYNFEDAVLISECLVYGDIYTSFHIRKYEIQTHVTTQGPERITKEIPHLEGRLLRNLDKNGIVMLGSWVETGDILVGKLTPQVAKESSYAPEDRLLRAILGIQVSTSKETCLKLPIGGRGRVIDVRWVQKKGGSSYNPEIIRVYISQKREIKVGDKVAGRHGNKGIISKILPRQDMPYLQDGRPVDMVFNPLGVPSRMNVGQIFECSLGLAGSLLDRHYRIAPFDERYEQEASRKLVFSELYEASKQTANPWVFEPEYPGKSRIFDGRTGDPFEQPVIIGKPYILKLIHQVDDKIHGRSSGHYALVTQQPLRGRSKQGGQRVGEMEVWALEGFGVAHILQEMLTYKSDHIRARQEVLGTTIIGGTIPKPEDAPESFRLLVRELRSLALELNHFLVSEKNFQINRKEV.

It belongs to the RNA polymerase beta chain family. In plastids the minimal PEP RNA polymerase catalytic core is composed of four subunits: alpha, beta, beta', and beta''. When a (nuclear-encoded) sigma factor is associated with the core the holoenzyme is formed, which can initiate transcription.

Its subcellular location is the plastid. It localises to the chloroplast. The catalysed reaction is RNA(n) + a ribonucleoside 5'-triphosphate = RNA(n+1) + diphosphate. Its function is as follows. DNA-dependent RNA polymerase catalyzes the transcription of DNA into RNA using the four ribonucleoside triphosphates as substrates. The polypeptide is DNA-directed RNA polymerase subunit beta (Crucihimalaya wallichii (Rock-cress)).